The chain runs to 264 residues: Phosphonoacetaldehyde hydrolase (264 aa).

The Nucleophile role is filled by Asp9. The Mg(2+) site is built by Asp9 and Ala11. The Schiff-base intermediate with substrate role is filled by Lys50. Residue Asp183 participates in Mg(2+) binding.

The protein belongs to the HAD-like hydrolase superfamily. PhnX family. Homodimer. Mg(2+) serves as cofactor.

The catalysed reaction is phosphonoacetaldehyde + H2O = acetaldehyde + phosphate + H(+). Its function is as follows. Involved in phosphonate degradation. The sequence is that of Phosphonoacetaldehyde hydrolase from Bacillus anthracis.